The primary structure comprises 211 residues: Peptide methionine sulfoxide reductase MsrA (211 aa).

The active site involves Cys-52.

It belongs to the MsrA Met sulfoxide reductase family.

It carries out the reaction L-methionyl-[protein] + [thioredoxin]-disulfide + H2O = L-methionyl-(S)-S-oxide-[protein] + [thioredoxin]-dithiol. The enzyme catalyses [thioredoxin]-disulfide + L-methionine + H2O = L-methionine (S)-S-oxide + [thioredoxin]-dithiol. Functionally, has an important function as a repair enzyme for proteins that have been inactivated by oxidation. Catalyzes the reversible oxidation-reduction of methionine sulfoxide in proteins to methionine. The polypeptide is Peptide methionine sulfoxide reductase MsrA (Klebsiella pneumoniae (strain 342)).